The following is a 250-amino-acid chain: Non-specific acid phosphatase (250 aa).

The N-terminal stretch at M1 to A20 is a signal peptide.

This sequence belongs to the class A bacterial acid phosphatase family. As to quaternary structure, homodimer.

The protein resides in the periplasm. It catalyses the reaction a phosphate monoester + H2O = an alcohol + phosphate. The protein is Non-specific acid phosphatase (phoN) of Salmonella typhimurium (strain LT2 / SGSC1412 / ATCC 700720).